A 186-amino-acid polypeptide reads, in one-letter code: Peptidyl-tRNA hydrolase (186 aa).

Tyr-14 serves as a coordination point for tRNA. His-19 (proton acceptor) is an active-site residue. TRNA is bound by residues Phe-64, Asn-66, and Asn-112.

The protein belongs to the PTH family. In terms of assembly, monomer.

The protein localises to the cytoplasm. It catalyses the reaction an N-acyl-L-alpha-aminoacyl-tRNA + H2O = an N-acyl-L-amino acid + a tRNA + H(+). Its function is as follows. Hydrolyzes ribosome-free peptidyl-tRNAs (with 1 or more amino acids incorporated), which drop off the ribosome during protein synthesis, or as a result of ribosome stalling. Functionally, catalyzes the release of premature peptidyl moieties from peptidyl-tRNA molecules trapped in stalled 50S ribosomal subunits, and thus maintains levels of free tRNAs and 50S ribosomes. The protein is Peptidyl-tRNA hydrolase of Anaplasma marginale (strain St. Maries).